The sequence spans 202 residues: Urease accessory protein UreF (202 aa).

The protein belongs to the UreF family. UreD, UreF and UreG form a complex that acts as a GTP-hydrolysis-dependent molecular chaperone, activating the urease apoprotein by helping to assemble the nickel containing metallocenter of UreC. The UreE protein probably delivers the nickel.

It localises to the cytoplasm. Required for maturation of urease via the functional incorporation of the urease nickel metallocenter. In Sporosarcina pasteurii (Bacillus pasteurii), this protein is Urease accessory protein UreF.